A 228-amino-acid polypeptide reads, in one-letter code: Flavin-dependent thymidylate synthase (228 aa).

Positions 1 to 217 constitute a ThyX domain; the sequence is MEYKILDKGF…PWTFEAFLKF (217 aa). Residues Thr-55, 78 to 80, and Glu-86 contribute to the FAD site; that span reads RHR. DUMP contacts are provided by residues 75–78, 86–90, and Arg-156; these read QWFR and EASLR. Residues 78–88 carry the ThyX motif motif; that stretch reads RHRIGSFNEAS. Residues 172 to 174 and Asn-178 contribute to the FAD site; that span reads NAR. Arg-183 provides a ligand contact to dUMP. Catalysis depends on Arg-183, which acts as the Involved in ionization of N3 of dUMP, leading to its activation.

The protein belongs to the thymidylate synthase ThyX family. As to quaternary structure, homotetramer. Requires FAD as cofactor.

It carries out the reaction dUMP + (6R)-5,10-methylene-5,6,7,8-tetrahydrofolate + NADPH + H(+) = dTMP + (6S)-5,6,7,8-tetrahydrofolate + NADP(+). It functions in the pathway pyrimidine metabolism; dTTP biosynthesis. Its function is as follows. Catalyzes the reductive methylation of 2'-deoxyuridine-5'-monophosphate (dUMP) to 2'-deoxythymidine-5'-monophosphate (dTMP) while utilizing 5,10-methylenetetrahydrofolate (mTHF) as the methyl donor, and NADPH and FADH(2) as the reductant. In Thermosipho africanus (strain TCF52B), this protein is Flavin-dependent thymidylate synthase.